A 184-amino-acid chain; its full sequence is ATP synthase subunit b, chloroplastic (184 aa).

The chain crosses the membrane as a helical span at residues 27 to 49 (LATNPINLSVVLGVLIFFGKGVL).

The protein belongs to the ATPase B chain family. As to quaternary structure, F-type ATPases have 2 components, F(1) - the catalytic core - and F(0) - the membrane proton channel. F(1) has five subunits: alpha(3), beta(3), gamma(1), delta(1), epsilon(1). F(0) has four main subunits: a(1), b(1), b'(1) and c(10-14). The alpha and beta chains form an alternating ring which encloses part of the gamma chain. F(1) is attached to F(0) by a central stalk formed by the gamma and epsilon chains, while a peripheral stalk is formed by the delta, b and b' chains.

Its subcellular location is the plastid. The protein resides in the chloroplast thylakoid membrane. F(1)F(0) ATP synthase produces ATP from ADP in the presence of a proton or sodium gradient. F-type ATPases consist of two structural domains, F(1) containing the extramembraneous catalytic core and F(0) containing the membrane proton channel, linked together by a central stalk and a peripheral stalk. During catalysis, ATP synthesis in the catalytic domain of F(1) is coupled via a rotary mechanism of the central stalk subunits to proton translocation. In terms of biological role, component of the F(0) channel, it forms part of the peripheral stalk, linking F(1) to F(0). The polypeptide is ATP synthase subunit b, chloroplastic (Atropa belladonna (Belladonna)).